The chain runs to 201 residues: Putative tRNA-binding protein YtpR (201 aa).

Positions 90-200 (VDLSPKFVVG…GDYEAGDAFQ (111 aa)) constitute a tRNA-binding domain.

This is Putative tRNA-binding protein YtpR (ytpR) from Bacillus subtilis (strain 168).